The following is a 255-amino-acid chain: Pyridoxine 5'-phosphate synthase (255 aa).

Positions 8 and 19 each coordinate 3-amino-2-oxopropyl phosphate. The Proton acceptor role is filled by His-44. Residues Arg-46 and His-51 each coordinate 1-deoxy-D-xylulose 5-phosphate. Glu-74 acts as the Proton acceptor in catalysis. Residue Thr-111 participates in 1-deoxy-D-xylulose 5-phosphate binding. His-202 serves as the catalytic Proton donor. 3-amino-2-oxopropyl phosphate contacts are provided by residues Asp-203 and 225-226; that span reads GH.

This sequence belongs to the PNP synthase family. As to quaternary structure, homooctamer; tetramer of dimers.

The protein resides in the cytoplasm. It carries out the reaction 3-amino-2-oxopropyl phosphate + 1-deoxy-D-xylulose 5-phosphate = pyridoxine 5'-phosphate + phosphate + 2 H2O + H(+). The protein operates within cofactor biosynthesis; pyridoxine 5'-phosphate biosynthesis; pyridoxine 5'-phosphate from D-erythrose 4-phosphate: step 5/5. Catalyzes the complicated ring closure reaction between the two acyclic compounds 1-deoxy-D-xylulose-5-phosphate (DXP) and 3-amino-2-oxopropyl phosphate (1-amino-acetone-3-phosphate or AAP) to form pyridoxine 5'-phosphate (PNP) and inorganic phosphate. The polypeptide is Pyridoxine 5'-phosphate synthase (Xanthomonas axonopodis pv. citri (strain 306)).